Consider the following 103-residue polypeptide: uncharacterized protein (103 aa).

A helical membrane pass occupies residues Pro35 to Tyr57.

It is found in the host membrane. This is an uncharacterized protein from Acidianus bottle-shaped virus (isolate Italy/Pozzuoli) (ABV).